The chain runs to 276 residues: N-acyl homoserine lactonase AiiB (276 aa).

Zn(2+)-binding residues include His-111, His-113, His-116, His-191, Asp-213, and His-259.

This sequence belongs to the metallo-beta-lactamase superfamily. It depends on Zn(2+) as a cofactor.

The catalysed reaction is an N-acyl-L-homoserine lactone + H2O = an N-acyl-L-homoserine + H(+). The chain is N-acyl homoserine lactonase AiiB from Rhizobium rhizogenes (strain K84 / ATCC BAA-868) (Agrobacterium radiobacter).